The chain runs to 408 residues: LL-diaminopimelate aminotransferase (408 aa).

Tyr-15 and Gly-42 together coordinate substrate. Pyridoxal 5'-phosphate contacts are provided by residues Tyr-72, 108-109 (SK), Tyr-132, Asn-187, Tyr-218, and 246-248 (SFS). Positions 109, 132, and 187 each coordinate substrate. N6-(pyridoxal phosphate)lysine is present on Lys-249. Pyridoxal 5'-phosphate-binding residues include Arg-257 and Asn-292. Substrate is bound by residues Asn-292 and Arg-388.

This sequence belongs to the class-I pyridoxal-phosphate-dependent aminotransferase family. LL-diaminopimelate aminotransferase subfamily. In terms of assembly, homodimer. Pyridoxal 5'-phosphate is required as a cofactor.

The enzyme catalyses (2S,6S)-2,6-diaminopimelate + 2-oxoglutarate = (S)-2,3,4,5-tetrahydrodipicolinate + L-glutamate + H2O + H(+). Its pathway is amino-acid biosynthesis; L-lysine biosynthesis via DAP pathway; LL-2,6-diaminopimelate from (S)-tetrahydrodipicolinate (aminotransferase route): step 1/1. Its function is as follows. Involved in the synthesis of meso-diaminopimelate (m-DAP or DL-DAP), required for both lysine and peptidoglycan biosynthesis. Catalyzes the direct conversion of tetrahydrodipicolinate to LL-diaminopimelate. Is also able to catalyze the reverse reaction in vitro, i.e. the transamination of LL-diaminopimelate with 2-oxoglutarate to produce tetrahydrodipicolinate and glutamate. Cannot use m-DAP, lysine or ornithine as the amino-group donor, when using 2-oxoglutarate as the amino-group acceptor. Cannot use pyruvate, indole 3-pyruvate, oxaloacetate or phenyl pyruvate as the amino-group acceptor, when using LL-DAP as the amino-group donor. The protein is LL-diaminopimelate aminotransferase of Leptospira interrogans serogroup Icterohaemorrhagiae serovar copenhageni (strain Fiocruz L1-130).